The following is a 206-amino-acid chain: MARYLGPKCRLSRREKTDLQLKSGIRAIDSKCNIERIPGMHWQRRGRTTDYGVQLRMKQMIKRYYDVLEKQFANYYKQADRLKGSTGDNLLKLLESRLDNVVYRMGFSATRAEARQLISHKAILVNGEVVNIPSYQVKPGDIIEVRSRAKGQLRIKGALELAQQRAPISWIEVDTKKMTGTFKEQPDVAELPAEFKVNLVVELYSK.

Residues 96–158 (SRLDNVVYRM…AKGQLRIKGA (63 aa)) form the S4 RNA-binding domain.

The protein belongs to the universal ribosomal protein uS4 family. In terms of assembly, part of the 30S ribosomal subunit. Contacts protein S5. The interaction surface between S4 and S5 is involved in control of translational fidelity.

Functionally, one of the primary rRNA binding proteins, it binds directly to 16S rRNA where it nucleates assembly of the body of the 30S subunit. With S5 and S12 plays an important role in translational accuracy. The sequence is that of Small ribosomal subunit protein uS4 from Coxiella burnetii (strain CbuK_Q154) (Coxiella burnetii (strain Q154)).